A 588-amino-acid chain; its full sequence is Lamin-B1 (588 aa).

Over residues 1-12 the composition is skewed to polar residues; sequence MATATPVQQQRA. Residues 1-34 form a disordered region; that stretch reads MATATPVQQQRAGSRASAPATPLSPTRLSRLQEK. An N-acetylalanine modification is found at alanine 2. Positions 2 to 35 are head; sequence ATATPVQQQRAGSRASAPATPLSPTRLSRLQEKE. Phosphothreonine occurs at positions 3 and 5. Arginine 15 is modified (omega-N-methylarginine). Phosphoserine is present on serine 17. Position 21 is a phosphothreonine (threonine 21). The residue at position 24 (serine 24) is a Phosphoserine. The residue at position 26 (threonine 26) is a Phosphothreonine. A Phosphoserine modification is found at serine 29. Residues 33-389 form the IF rod domain; the sequence is EKEELRELND…KLLEGEEERL (357 aa). The tract at residues 36–70 is coil 1A; the sequence is ELRELNDRLAVYIDKVRSLETENSALQLQVTEREE. Residues 71–82 form a linker 1 region; the sequence is VRGRELTGLKAL. Residues 83–216 are coil 1B; it reads YETELADARR…EFRKNMYEEE (134 aa). Lysine 103 is covalently cross-linked (Glycyl lysine isopeptide (Lys-Gly) (interchain with G-Cter in SUMO2)). An N6-acetyllysine modification is found at lysine 112. Lysine 124 participates in a covalent cross-link: Glycyl lysine isopeptide (Lys-Gly) (interchain with G-Cter in SUMO2). The residue at position 127 (serine 127) is a Phosphoserine. Lysine 146 participates in a covalent cross-link: Glycyl lysine isopeptide (Lys-Gly) (interchain with G-Cter in SUMO2). The residue at position 158 (lysine 158) is an N6-acetyllysine; alternate. Residue lysine 158 forms a Glycyl lysine isopeptide (Lys-Gly) (interchain with G-Cter in SUMO2); alternate linkage. Serine 159 carries the post-translational modification Phosphoserine. Lysine 182 participates in a covalent cross-link: Glycyl lysine isopeptide (Lys-Gly) (interchain with G-Cter in SUMO2). Residues serine 201 and serine 233 each carry the phosphoserine modification. The segment at 217–244 is linker 2; it reads INETRRKHETRLVEVDSGRQIEYEYKLA. Glycyl lysine isopeptide (Lys-Gly) (interchain with G-Cter in SUMO2) cross-links involve residues lysine 242 and lysine 262. Residues 245-387 are coil 2; sequence QALHEMREQH…YRKLLEGEEE (143 aa). Lysine 272 carries the post-translational modification N6-acetyllysine; alternate. Lysine 272 is covalently cross-linked (Glycyl lysine isopeptide (Lys-Gly) (interchain with G-Cter in SUMO2); alternate). Phosphoserine is present on residues serine 279 and serine 303. A Glycyl lysine isopeptide (Lys-Gly) (interchain with G-Cter in SUMO2) cross-link involves residue lysine 313. N6-acetyllysine; alternate is present on lysine 331. Lysine 331 is covalently cross-linked (Glycyl lysine isopeptide (Lys-Gly) (interchain with G-Cter in SUMO2); alternate). Phosphoserine is present on residues serine 376 and serine 394. A tail region spans residues 388–588; the sequence is RLKLSPSPSS…RASNKSCAIM (201 aa). The segment covering 391–410 has biased composition (low complexity); the sequence is LSPSPSSRVTVSRASSSRSV. The interval 391 to 433 is disordered; the sequence is LSPSPSSRVTVSRASSSRSVRTTRGKRKRVDVEESEASSSVSI. O-linked (GlcNAc) threonine glycosylation occurs at threonine 400. Arginine 414 is subject to Omega-N-methylarginine. The Nuclear localization signal signature appears at 416 to 421; sequence KRKRVD. The LTD domain maps to 431–547; it reads VSISHSASAT…EEVAQRSTVF (117 aa). Lysine 484 carries the post-translational modification N6-acetyllysine. A Glycyl lysine isopeptide (Lys-Gly) (interchain with G-Cter in SUMO2) cross-link involves residue lysine 533. Serine 535 is modified (phosphoserine). Residue lysine 548 forms a Glycyl lysine isopeptide (Lys-Gly) (interchain with G-Cter in SUMO2) linkage. The residue at position 585 (cysteine 585) is a Cysteine methyl ester. Residue cysteine 585 is the site of S-farnesyl cysteine attachment. Residues 586–588 constitute a propeptide, removed in mature form; the sequence is AIM.

This sequence belongs to the intermediate filament family. In terms of assembly, homodimer. Lamin dimers then assemble into dimeric head-to-tail polymers. Ultimately, two head-to-tail polymers assemble laterally into a protofilament with a uniformly shaped rod of 3.5 nm in diameter. Interacts with SPAG4 and SEPT12. In terms of processing, B-type lamins undergo a series of modifications, such as farnesylation and phosphorylation. Increased phosphorylation of the lamins occurs before envelope disintegration and probably plays a role in regulating lamin associations. Post-translationally, phosphorylation plays a key role in lamin organization, subcellular localization and nuclear envelope disintegration. Phosphorylation by CDK1 at Ser-24 and Ser-394 at the onset of mitosis drives lamin disassembly and nuclear envelope breakdown.

It is found in the nucleus lamina. Functionally, lamins are intermediate filament proteins that assemble into a filamentous meshwork, and which constitute the major components of the nuclear lamina, a fibrous layer on the nucleoplasmic side of the inner nuclear membrane. Lamins provide a framework for the nuclear envelope, bridging the nuclear envelope and chromatin, thereby playing an important role in nuclear assembly, chromatin organization, nuclear membrane and telomere dynamics. The structural integrity of the lamina is strictly controlled by the cell cycle, as seen by the disintegration and formation of the nuclear envelope in prophase and telophase, respectively. The polypeptide is Lamin-B1 (Lmnb1) (Mus musculus (Mouse)).